Here is a 546-residue protein sequence, read N- to C-terminus: CTP synthase (546 aa).

Residues 1-265 form an amidoligase domain region; the sequence is MTKYIFVTGG…DDIIAEQLQL (265 aa). Position 13 (Ser-13) interacts with CTP. Ser-13 serves as a coordination point for UTP. ATP contacts are provided by residues 14–19 and Asp-71; that span reads SLGKGI. Mg(2+)-binding residues include Asp-71 and Glu-139. Residues 146–148, 186–191, and Lys-222 each bind CTP; these read DIE and KTKPTQ. UTP-binding positions include 186–191 and Lys-222; that span reads KTKPTQ. A Glutamine amidotransferase type-1 domain is found at 290–542; the sequence is KIAMVGKYVD…VKAALAHQAD (253 aa). Gly-351 provides a ligand contact to L-glutamine. Cys-378 serves as the catalytic Nucleophile; for glutamine hydrolysis. Residues 379–382, Glu-402, and Arg-469 each bind L-glutamine; that span reads LGMQ. Catalysis depends on residues His-515 and Glu-517.

Belongs to the CTP synthase family. Homotetramer.

The enzyme catalyses UTP + L-glutamine + ATP + H2O = CTP + L-glutamate + ADP + phosphate + 2 H(+). It catalyses the reaction L-glutamine + H2O = L-glutamate + NH4(+). It carries out the reaction UTP + NH4(+) + ATP = CTP + ADP + phosphate + 2 H(+). Its pathway is pyrimidine metabolism; CTP biosynthesis via de novo pathway; CTP from UDP: step 2/2. Its activity is regulated as follows. Allosterically activated by GTP, when glutamine is the substrate; GTP has no effect on the reaction when ammonia is the substrate. The allosteric effector GTP functions by stabilizing the protein conformation that binds the tetrahedral intermediate(s) formed during glutamine hydrolysis. Inhibited by the product CTP, via allosteric rather than competitive inhibition. Its function is as follows. Catalyzes the ATP-dependent amination of UTP to CTP with either L-glutamine or ammonia as the source of nitrogen. Regulates intracellular CTP levels through interactions with the four ribonucleotide triphosphates. This Chromobacterium violaceum (strain ATCC 12472 / DSM 30191 / JCM 1249 / CCUG 213 / NBRC 12614 / NCIMB 9131 / NCTC 9757 / MK) protein is CTP synthase.